The chain runs to 298 residues: Oxygen-dependent coproporphyrinogen-III oxidase (298 aa).

Ser-92 is a substrate binding site. A divalent metal cation-binding residues include His-96 and His-106. His-106 functions as the Proton donor in the catalytic mechanism. Asn-108 to Arg-110 contacts substrate. Residues His-145 and His-175 each coordinate a divalent metal cation. The interval Tyr-239 to Glu-274 is important for dimerization. Gly-257 to Arg-259 provides a ligand contact to substrate.

Belongs to the aerobic coproporphyrinogen-III oxidase family. In terms of assembly, homodimer. A divalent metal cation is required as a cofactor.

Its subcellular location is the cytoplasm. It carries out the reaction coproporphyrinogen III + O2 + 2 H(+) = protoporphyrinogen IX + 2 CO2 + 2 H2O. Its pathway is porphyrin-containing compound metabolism; protoporphyrin-IX biosynthesis; protoporphyrinogen-IX from coproporphyrinogen-III (O2 route): step 1/1. Involved in the heme biosynthesis. Catalyzes the aerobic oxidative decarboxylation of propionate groups of rings A and B of coproporphyrinogen-III to yield the vinyl groups in protoporphyrinogen-IX. This is Oxygen-dependent coproporphyrinogen-III oxidase from Stenotrophomonas maltophilia (strain R551-3).